The chain runs to 155 residues: GLWFGPRIGKRSLRMATEDNRQAFFKLLEAADALKYYYDQLPYEMQADEPETRVTKKVIFTPKLGRSLAYDDKVFENVEFTPRLGRRLADDMPATPADQEMYRPDPEQIDSRTKYFSPRLGRTMNFSPRLGRELAYEMVPSKIRVVRSTNKTQST.

At Ile-8 the chain carries Isoleucine amide. A propeptide spanning residues 12–55 is cleaved from the precursor; sequence SLRMATEDNRQAFFKLLEAADALKYYYDQLPYEMQADEPETRVT. A leucine amide mark is found at Leu-64, Leu-84, Leu-120, and Leu-130. The propeptide occupies 133–155; sequence ELAYEMVPSKIRVVRSTNKTQST.

The protein belongs to the pyrokinin family.

Its subcellular location is the secreted. Functionally, a hormone that controls sex pheromone production in females and pheromone responsiveness in male. Also mediates visceral muscle contractile activity (myotropic activity). The chain is PBAN-type neuropeptides (PBAN) from Mamestra brassicae (Cabbage moth).